We begin with the raw amino-acid sequence, 122 residues long: Large ribosomal subunit protein uL14 (122 aa).

It belongs to the universal ribosomal protein uL14 family. Part of the 50S ribosomal subunit. Forms a cluster with proteins L3 and L19. In the 70S ribosome, L14 and L19 interact and together make contacts with the 16S rRNA in bridges B5 and B8.

In terms of biological role, binds to 23S rRNA. Forms part of two intersubunit bridges in the 70S ribosome. This is Large ribosomal subunit protein uL14 from Mycobacterium tuberculosis (strain ATCC 25177 / H37Ra).